Reading from the N-terminus, the 131-residue chain is Neurophysin 2 (131 aa).

7 disulfide bridges follow: cysteine 10-cysteine 55, cysteine 13-cysteine 27, cysteine 21-cysteine 45, cysteine 28-cysteine 35, cysteine 62-cysteine 74, cysteine 68-cysteine 86, and cysteine 75-cysteine 80.

Belongs to the vasopressin/oxytocin family.

The protein localises to the secreted. Neurophysin 2 specifically binds vasopressin. This chain is Neurophysin 2, found in Anser anser anser (Western greylag goose).